The primary structure comprises 287 residues: Phosphoribosylaminoimidazole-succinocarboxamide synthase (287 aa).

Belongs to the SAICAR synthetase family.

The enzyme catalyses 5-amino-1-(5-phospho-D-ribosyl)imidazole-4-carboxylate + L-aspartate + ATP = (2S)-2-[5-amino-1-(5-phospho-beta-D-ribosyl)imidazole-4-carboxamido]succinate + ADP + phosphate + 2 H(+). It functions in the pathway purine metabolism; IMP biosynthesis via de novo pathway; 5-amino-1-(5-phospho-D-ribosyl)imidazole-4-carboxamide from 5-amino-1-(5-phospho-D-ribosyl)imidazole-4-carboxylate: step 1/2. This is Phosphoribosylaminoimidazole-succinocarboxamide synthase from Neisseria meningitidis serogroup A / serotype 4A (strain DSM 15465 / Z2491).